The primary structure comprises 1341 residues: DNA-directed RNA polymerase subunit beta (1341 aa).

This sequence belongs to the RNA polymerase beta chain family. The RNAP catalytic core consists of 2 alpha, 1 beta, 1 beta' and 1 omega subunit. When a sigma factor is associated with the core the holoenzyme is formed, which can initiate transcription.

The catalysed reaction is RNA(n) + a ribonucleoside 5'-triphosphate = RNA(n+1) + diphosphate. Its function is as follows. DNA-dependent RNA polymerase catalyzes the transcription of DNA into RNA using the four ribonucleoside triphosphates as substrates. The sequence is that of DNA-directed RNA polymerase subunit beta from Vibrio cholerae serotype O1 (strain ATCC 39541 / Classical Ogawa 395 / O395).